A 78-amino-acid polypeptide reads, in one-letter code: Small ribosomal subunit protein bS20 (78 aa).

The protein belongs to the bacterial ribosomal protein bS20 family.

In terms of biological role, binds directly to 16S ribosomal RNA. This is Small ribosomal subunit protein bS20 from Streptococcus sanguinis (strain SK36).